Consider the following 592-residue polypeptide: Bifunctional enzyme BirA/CoaX (592 aa).

Residues 1-329 (MTVLKPSHWR…ISLRPDNRSV (329 aa)) are biotin--protein ligase. The 177-residue stretch at 83 to 259 (QTALKHECAS…ELGAVLEQYA (177 aa)) folds into the BPL/LPL catalytic domain. Residues 336 to 592 (DSERFLLLEG…AAEGGESEHA (257 aa)) form a type III pantothenate kinase region. 344-351 (EGGNSRLK) serves as a coordination point for ATP. Substrate contacts are provided by residues tyrosine 426 and 433 to 436 (GSDR). The active-site Proton acceptor is aspartate 435. Threonine 458 provides a ligand contact to ATP. Threonine 508 serves as a coordination point for substrate.

The protein in the N-terminal section; belongs to the biotin--protein ligase family. In the C-terminal section; belongs to the type III pantothenate kinase family. NH4(+) is required as a cofactor. Requires K(+) as cofactor.

It localises to the cytoplasm. The enzyme catalyses biotin + L-lysyl-[protein] + ATP = N(6)-biotinyl-L-lysyl-[protein] + AMP + diphosphate + H(+). It carries out the reaction (R)-pantothenate + ATP = (R)-4'-phosphopantothenate + ADP + H(+). Its pathway is cofactor biosynthesis; coenzyme A biosynthesis; CoA from (R)-pantothenate: step 1/5. Functionally, activates biotin to form biotinyl-5'-adenylate and transfers the biotin moiety to biotin-accepting proteins. Its function is as follows. Catalyzes the phosphorylation of pantothenate (Pan), the first step in CoA biosynthesis. The polypeptide is Bifunctional enzyme BirA/CoaX (birA/coaX) (Neisseria gonorrhoeae (strain ATCC 700825 / FA 1090)).